The sequence spans 1518 residues: WD repeat-containing protein 62 (1518 aa).

A2 carries the N-acetylalanine modification. At S33 the chain carries Phosphoserine. Position 46 is a phosphothreonine (T46). Phosphoserine is present on S49. T50 carries the post-translational modification Phosphothreonine. S52 bears the Phosphoserine mark. 12 WD repeats span residues 109–150 (TARK…QVAE), 153–194 (GHKY…VVAS), 196–234 (KVSCRVIALSFSEDSSYFVTVGNRHVRFWFLEVSTETKV), 291–330 (INLKVSLSSCLCVSQELIFCGCTDGIVRIFQAHSLHYLAN), 357–396 (AVYPDTVALTFDPIHQWLSCVYKDHSIYIWDVKDINRVGK), 402–450 (FHSS…DSHW), 490–529 (DVKAGVRVMQVSPDGQHLASGDRSGNLRIHELHFMDELVK), 532–574 (AHDA…NLEQ), 578–618 (DHSS…DGLH), 626–665 (AEKTTLYDMDIDITQKYVAVACQDRNVRVYNTVNGKQKKC), 671–713 (GDEG…KMFG), and 714–752 (HSEIITSMKFTYDCHHLITVSGDSCVFIWHLGPEITNCM). S501 carries the post-translational modification Phosphoserine. Residues 762–772 (RQQQQHTNDKK) show a composition bias toward basic and acidic residues. Disordered regions lie at residues 762–824 (RQQQ…DPDP) and 908–935 (ASLLSESESPQEAGRGHPSFLPQQKESS). A compositionally biased stretch (polar residues) spans 781-790 (TYVSTPSEIH). The span at 797–809 (QTEDDLEEECEPE) shows a compositional bias: acidic residues. A WD 13 repeat occupies 803 to 846 (EEECEPEEMLKTPSKDSLDPDPRCLLTNGKLPLWAKRLLGDDDV). Residues 810–824 (EMLKTPSKDSLDPDP) are compositionally biased toward basic and acidic residues. Residues 908-920 (ASLLSESESPQEA) are compositionally biased toward low complexity. S944 carries the phosphoserine modification. Residues 962-1055 (EVEAGPGDQQ…PSSSLPQTPE (94 aa)) form a disordered region. Composition is skewed to polar residues over residues 971 to 981 (QGDSYLRVSSD) and 1045 to 1054 (VPSSSLPQTP). Phosphothreonine is present on T1053. Phosphoserine occurs at positions 1070, 1093, 1101, 1123, 1144, 1228, 1248, and 1249. One copy of the WD 14 repeat lies at 1132 to 1173 (GGSQPRAGTGYASPDRTHVLAAGKAEETLEAWRPPPPCLTSL). The stretch at 1255-1293 (SLGQELQAITTATTPSLDSEGQEPALRSWGNHEARANLR) is one WD 15 repeat. Residue T1268 is modified to Phosphothreonine. The segment at 1339–1377 (FRPSLPAPESPGLPAHPSNPQLPEARPGIPGGTASLLEP) is disordered.

Can form homodimers (via C-terminus). Interacts (via C-terminus) with MAPKBP1 (via C-terminus). Interacts with CDK5RAP2, CEP152, CEP63 and KIAA0753. CEP63, CDK5RAP2, CEP152, WDR62 are proposed to form a stepwise assembled complex at the centrosome forming a ring near parental centrioles. Present in fetal brain, enriched within the ventricular and subventricular zone (at protein level). In the embryonic brain it is expressed in mitotic neural precursor cells.

The protein resides in the nucleus. It localises to the cytoplasm. The protein localises to the cytoskeleton. It is found in the spindle pole. Its subcellular location is the microtubule organizing center. The protein resides in the centrosome. It localises to the centriole. Its function is as follows. Required for cerebral cortical development. Plays a role in neuronal proliferation and migration. Plays a role in mother-centriole-dependent centriole duplication; the function also seems to involve CEP152, CDK5RAP2 and CEP63 through a stepwise assembled complex at the centrosome that recruits CDK2 required for centriole duplication. The polypeptide is WD repeat-containing protein 62 (WDR62) (Homo sapiens (Human)).